Reading from the N-terminus, the 324-residue chain is Acetyl-coenzyme A carboxylase carboxyl transferase subunit alpha (324 aa).

The 255-residue stretch at 37–291 (KLDKRLDRLK…QEYVLQEWVK (255 aa)) folds into the CoA carboxyltransferase C-terminal domain.

This sequence belongs to the AccA family. In terms of assembly, acetyl-CoA carboxylase is a heterohexamer composed of biotin carboxyl carrier protein (AccB), biotin carboxylase (AccC) and two subunits each of ACCase subunit alpha (AccA) and ACCase subunit beta (AccD).

The protein localises to the cytoplasm. The enzyme catalyses N(6)-carboxybiotinyl-L-lysyl-[protein] + acetyl-CoA = N(6)-biotinyl-L-lysyl-[protein] + malonyl-CoA. Its pathway is lipid metabolism; malonyl-CoA biosynthesis; malonyl-CoA from acetyl-CoA: step 1/1. Functionally, component of the acetyl coenzyme A carboxylase (ACC) complex. First, biotin carboxylase catalyzes the carboxylation of biotin on its carrier protein (BCCP) and then the CO(2) group is transferred by the carboxyltransferase to acetyl-CoA to form malonyl-CoA. The chain is Acetyl-coenzyme A carboxylase carboxyl transferase subunit alpha from Chlamydia trachomatis serovar L2 (strain ATCC VR-902B / DSM 19102 / 434/Bu).